Reading from the N-terminus, the 88-residue chain is U-scoloptoxin(12)-Sa1a (88 aa).

Residues 1–20 (MKYMIITVVILFTCALKMFC) form the signal peptide.

The protein belongs to the scoloptoxin-12 family. Post-translationally, contains 3 disulfide bonds. As to expression, expressed by the venom gland.

Its subcellular location is the secreted. The polypeptide is U-scoloptoxin(12)-Sa1a (Scolopendra alternans (Florida Keys giant centipede)).